The primary structure comprises 500 residues: Probable E3 ubiquitin-protein ligase ARI16 (500 aa).

The TRIAD supradomain stretch occupies residues 74-288 (NSNSSSADRE…QGNWNCSPVA (215 aa)). The segment at 78-130 (SSADRETGDGDYLVSTPFCSHKFSTTCWSEYLSDALKKNKEQRGLISCLSQDC) adopts an RING-type 1 zinc-finger fold. Zn(2+) contacts are provided by Cys96, His98, Cys125, Cys130, Cys169, Cys174, Cys194, Cys196, Cys201, Cys204, His209, Cys214, Cys241, Cys244, Cys261, Cys263, Cys268, Cys271, His278, and Cys284. The segment at 148–214 (EMYENYILES…GLESHRPVSC (67 aa)) adopts an IBR-type zinc-finger fold. The segment at 241–271 (CPKCKIPVQQNGDPNYRLINCICSNNFCWIC) adopts an RING-type 2; atypical zinc-finger fold. The RanBP2-type zinc finger occupies 453–483 (EPGSRWFCDRCTFENSWVDKQCKMCFFPLDY).

Belongs to the RBR family. Ariadne subfamily. Zn(2+) serves as cofactor. Preferentially expressed in green siliques.

It carries out the reaction [E2 ubiquitin-conjugating enzyme]-S-ubiquitinyl-L-cysteine + [acceptor protein]-L-lysine = [E2 ubiquitin-conjugating enzyme]-L-cysteine + [acceptor protein]-N(6)-ubiquitinyl-L-lysine.. The protein operates within protein modification; protein ubiquitination. Might act as an E3 ubiquitin-protein ligase, or as part of E3 complex, which accepts ubiquitin from specific E2 ubiquitin-conjugating enzymes and then transfers it to substrates. The polypeptide is Probable E3 ubiquitin-protein ligase ARI16 (ARI16) (Arabidopsis thaliana (Mouse-ear cress)).